The sequence spans 612 residues: Dihydroxy-acid dehydratase (612 aa).

Asp81 is a binding site for Mg(2+). Cys122 provides a ligand contact to [2Fe-2S] cluster. Asp123 and Lys124 together coordinate Mg(2+). Lys124 carries the post-translational modification N6-carboxylysine. Cys195 provides a ligand contact to [2Fe-2S] cluster. Residue Glu491 participates in Mg(2+) binding. Ser517 (proton acceptor) is an active-site residue.

This sequence belongs to the IlvD/Edd family. As to quaternary structure, homodimer. Requires [2Fe-2S] cluster as cofactor. The cofactor is Mg(2+).

The catalysed reaction is (2R)-2,3-dihydroxy-3-methylbutanoate = 3-methyl-2-oxobutanoate + H2O. The enzyme catalyses (2R,3R)-2,3-dihydroxy-3-methylpentanoate = (S)-3-methyl-2-oxopentanoate + H2O. It functions in the pathway amino-acid biosynthesis; L-isoleucine biosynthesis; L-isoleucine from 2-oxobutanoate: step 3/4. It participates in amino-acid biosynthesis; L-valine biosynthesis; L-valine from pyruvate: step 3/4. Functions in the biosynthesis of branched-chain amino acids. Catalyzes the dehydration of (2R,3R)-2,3-dihydroxy-3-methylpentanoate (2,3-dihydroxy-3-methylvalerate) into 2-oxo-3-methylpentanoate (2-oxo-3-methylvalerate) and of (2R)-2,3-dihydroxy-3-methylbutanoate (2,3-dihydroxyisovalerate) into 2-oxo-3-methylbutanoate (2-oxoisovalerate), the penultimate precursor to L-isoleucine and L-valine, respectively. This is Dihydroxy-acid dehydratase from Sinorhizobium medicae (strain WSM419) (Ensifer medicae).